The primary structure comprises 130 residues: Ribonuclease P protein component 2 (130 aa).

Belongs to the eukaryotic/archaeal RNase P protein component 2 family. As to quaternary structure, consists of a catalytic RNA component and at least 4-5 protein subunits.

It localises to the cytoplasm. It carries out the reaction Endonucleolytic cleavage of RNA, removing 5'-extranucleotides from tRNA precursor.. Part of ribonuclease P, a protein complex that generates mature tRNA molecules by cleaving their 5'-ends. This is Ribonuclease P protein component 2 from Methanococcus vannielii (strain ATCC 35089 / DSM 1224 / JCM 13029 / OCM 148 / SB).